Here is a 128-residue protein sequence, read N- to C-terminus: MGLMWGLFSVIIASAAQLSLGFAASHLPPMTHLWDFIAALLAFGLDARILLLGLLGYLLSVFCWYKTLHKLALSKAYALLSMSYVLVWIASMILPGWEGTFSLKALLGVACIMSGLMLIFLPTTKQRY.

Topologically, residues 1-2 (MG) are cytoplasmic. The helical transmembrane segment at 3–23 (LMWGLFSVIIASAAQLSLGFA) threads the bilayer. Topologically, residues 24–35 (ASHLPPMTHLWD) are periplasmic. A helical transmembrane segment spans residues 36-56 (FIAALLAFGLDARILLLGLLG). Residues 57-76 (YLLSVFCWYKTLHKLALSKA) lie on the Cytoplasmic side of the membrane. The helical transmembrane segment at 77 to 97 (YALLSMSYVLVWIASMILPGW) threads the bilayer. Over 98–100 (EGT) the chain is Periplasmic. The chain crosses the membrane as a helical span at residues 101–121 (FSLKALLGVACIMSGLMLIFL). The Cytoplasmic segment spans residues 122 to 128 (PTTKQRY).

It belongs to the ArnF family. As to quaternary structure, heterodimer of ArnE and ArnF.

It is found in the cell inner membrane. It participates in bacterial outer membrane biogenesis; lipopolysaccharide biosynthesis. Functionally, translocates 4-amino-4-deoxy-L-arabinose-phosphoundecaprenol (alpha-L-Ara4N-phosphoundecaprenol) from the cytoplasmic to the periplasmic side of the inner membrane. The sequence is that of Probable 4-amino-4-deoxy-L-arabinose-phosphoundecaprenol flippase subunit ArnF from Escherichia coli O17:K52:H18 (strain UMN026 / ExPEC).